The following is a 565-amino-acid chain: Arginine--tRNA ligase (565 aa).

A 'HIGH' region motif is present at residues 120–130 (PNIAKPFHVGH).

It belongs to the class-I aminoacyl-tRNA synthetase family. In terms of assembly, monomer.

Its subcellular location is the cytoplasm. It carries out the reaction tRNA(Arg) + L-arginine + ATP = L-arginyl-tRNA(Arg) + AMP + diphosphate. The chain is Arginine--tRNA ligase from Clostridium perfringens (strain 13 / Type A).